Reading from the N-terminus, the 202-residue chain is UMP-CMP kinase 3 (202 aa).

An ATP-binding site is contributed by 24 to 29 (GSGKGT). The interval 44–73 (SAGDLLRAEIKSGSENGTMIQNMIKEGKIV) is NMP. A ribonucleoside 5'-phosphate contacts are provided by residues Arg-50, 71–73 (KIV), and 98–101 (GFPR). Asn-105 is a CMP binding site. Positions 136–144 (GRNQGREDD) are LID. Arg-137 provides a ligand contact to ATP. A ribonucleoside 5'-phosphate-binding residues include Arg-141 and Arg-152. Position 180 (Lys-180) interacts with ATP.

Monomer. Mg(2+) serves as cofactor.

The protein resides in the cytoplasm. It localises to the nucleus. It catalyses the reaction CMP + ATP = CDP + ADP. It carries out the reaction dCMP + ATP = dCDP + ADP. The catalysed reaction is UMP + ATP = UDP + ADP. Its function is as follows. Catalyzes the phosphorylation of pyrimidine nucleoside monophosphates at the expense of ATP. Plays an important role in de novo pyrimidine nucleotide biosynthesis. Has preference for UMP and CMP as phosphate acceptors. Does not act on dCMP and dUMP. The polypeptide is UMP-CMP kinase 3 (UMK3) (Arabidopsis thaliana (Mouse-ear cress)).